The primary structure comprises 322 residues: MAEKNKKEHPVTKDRLHPRNKHRERYDFDALIATTPELAQYVTLNIYNDQSIDFFNPAAVLCLNQALLKHYYGIDEWNIPEGYLCPPIPGRADYIHNIAALLGTSANDVIPVGPAIKCLDIGVGANCVYPIIGNNEYGWSFVGADVDPVSVASAKNIVDKNKVLQGNVEIRLQNHPLDIFYGIIGEGERFDVTICNPPFHASAEDAAAGTLRKLSNLQHKKVTKANLNFGGQHNELWCEGGESAFVREMILESKKFAASCLWFSTLISKQTNLQKAYDQLEVLAPFDVRTIPMGQGNKSSRLIAWTFQSKEAQAKWVSARWK.

It belongs to the methyltransferase superfamily. METTL16/RlmF family.

It localises to the cytoplasm. It catalyses the reaction adenosine(1618) in 23S rRNA + S-adenosyl-L-methionine = N(6)-methyladenosine(1618) in 23S rRNA + S-adenosyl-L-homocysteine + H(+). Specifically methylates the adenine in position 1618 of 23S rRNA. The protein is Ribosomal RNA large subunit methyltransferase F of Cytophaga hutchinsonii (strain ATCC 33406 / DSM 1761 / CIP 103989 / NBRC 15051 / NCIMB 9469 / D465).